We begin with the raw amino-acid sequence, 415 residues long: MQVTLKTLQQQTFKIDIDPEETVKALKEKIESEKGKDAFPVAGQKLIYAGKILSDDTALKEYKIDEKNFVVVMVTKPKAVTSAVPATTQQSSSPSTTTVSSSPAAAVAQAPAPTPALAPTSTPASTTPASTTASSEPAPTGATQPEKPAEKPAQTPVLTSPAPADSTPGDSSRSNLFEDATSALVTGQSYENMVTEIMSMGYEREQVIAALRASFNNPDRAVEYLLMGIPGDRESQAVVDPPPQAVSTGTPQSPAVAAAAATTTATTTTTSGGHPLEFLRNQPQFQQMRQIIQQNPSLLPALLQQIGRENPQLLQQISQHQEHFIQMLNEPVQEAGGQGGGGGGGGGGGGGGGGIAEAGSGHMNYIQVTPQEKEAIERLKALGFPEGLVIQAYFACEKNENLAANFLLQQNFDED.

The region spanning 1–79 (MQVTLKTLQQ…VVVMVTKPKA (79 aa)) is the Ubiquitin-like domain. Residues 80–175 (VTSAVPATTQ…STPGDSSRSN (96 aa)) are disordered. The span at 84-143 (VPATTQQSSSPSTTTVSSSPAAAVAQAPAPTPALAPTSTPASTTPASTTASSEPAPTGAT) shows a compositional bias: low complexity. T155 bears the Phosphothreonine mark. A phosphoserine mark is found at S160 and S174. The residue at position 186 (T186) is a Phosphothreonine. The 41-residue stretch at 188–228 (QSYENMVTEIMSMGYEREQVIAALRASFNNPDRAVEYLLMG) folds into the UBA 1 domain. S199 bears the Phosphoserine mark. The residue at position 202 (Y202) is a Phosphotyrosine. The STI1 domain occupies 274–317 (HPLEFLRNQPQFQQMRQIIQQNPSLLPALLQQIGRENPQLLQQI). The segment at 334-355 (EAGGQGGGGGGGGGGGGGGGGI) is disordered. The span at 336 to 355 (GGQGGGGGGGGGGGGGGGGI) shows a compositional bias: gly residues. The region spanning 370–410 (PQEKEAIERLKALGFPEGLVIQAYFACEKNENLAANFLLQQ) is the UBA 2 domain.

This sequence belongs to the RAD23 family. In terms of assembly, component of the XPC complex composed of XPC, RAD23B and CETN2. Interacts with NGLY1 and PSMC1. Interacts with ATXN3. Interacts with AMFR. Interacts with VCP; the interaction is indirect and mediated by NGLY1.

Its subcellular location is the nucleus. It is found in the cytoplasm. In terms of biological role, multiubiquitin chain receptor involved in modulation of proteasomal degradation. Binds to polyubiquitin chains. Proposed to be capable to bind simultaneously to the 26S proteasome and to polyubiquitinated substrates and to deliver ubiquitinated proteins to the proteasome. May play a role in endoplasmic reticulum-associated degradation (ERAD) of misfolded glycoproteins by association with PNGase and delivering deglycosylated proteins to the proteasome. Involved in global genome nucleotide excision repair (GG-NER) by acting as component of the XPC complex. Cooperatively with Cetn2 appears to stabilize Xpc. May protect Xpc from proteasomal degradation. Its function is as follows. The XPC complex is proposed to represent the first factor bound at the sites of DNA damage and together with other core recognition factors, Xpa, RPA and the TFIIH complex, is part of the pre-incision (or initial recognition) complex. The XPC complex recognizes a wide spectrum of damaged DNA characterized by distortions of the DNA helix such as single-stranded loops, mismatched bubbles or single-stranded overhangs. The orientation of XPC complex binding appears to be crucial for inducing a productive NER. XPC complex is proposed to recognize and to interact with unpaired bases on the undamaged DNA strand which is followed by recruitment of the TFIIH complex and subsequent scanning for lesions in the opposite strand in a 5'-to-3' direction by the NER machinery. Cyclobutane pyrimidine dimers (CPDs) which are formed upon UV-induced DNA damage esacpe detection by the XPC complex due to a low degree of structural perurbation. Instead they are detected by the UV-DDB complex which in turn recruits and cooperates with the XPC complex in the respective DNA repair. In vitro, the XPC:RAD23B dimer is sufficient to initiate NER; it preferentially binds to cisplatin and UV-damaged double-stranded DNA and also binds to a variety of chemically and structurally diverse DNA adducts. XPC:RAD23B contacts DNA both 5' and 3' of a cisplatin lesion with a preference for the 5' side. Xpc:Rad22b induces a bend in DNA upon binding. Xpc:Rad23b stimulates the activity of DNA glycosylases Tdg and Smug1. This chain is UV excision repair protein RAD23 homolog B (Rad23b), found in Rattus norvegicus (Rat).